The primary structure comprises 138 residues: uncharacterized protein (138 aa).

The next 3 helical transmembrane spans lie at 8–28, 47–67, and 82–102; these read LIIQ…AFLP, FIIC…TIIV, and TLPV…IAFI.

It to U.parvum UU007, UU008 and UU041.

Its subcellular location is the cell membrane. This is an uncharacterized protein from Ureaplasma parvum serovar 3 (strain ATCC 700970).